Consider the following 451-residue polypeptide: UBP1-associated protein 2B (451 aa).

The interval 1 to 86 (MTKKRKLESE…GNEDDDEEEP (86 aa)) is disordered. Composition is skewed to basic and acidic residues over residues 25–38 (CEKE…VDNQ) and 49–63 (DTLK…KGED). Residues 67–77 (AETSSGSGNQG) show a composition bias toward polar residues. 2 RRM domains span residues 128-236 (RKIF…NVSA) and 227-314 (RKIY…QHQH). Disordered regions lie at residues 302 to 335 (ANDG…GYGA) and 423 to 451 (GGYQ…YMGR). Residues 431 to 451 (GQGGAGRGQHGAGYGGPYMGR) show a composition bias toward gly residues.

In terms of tissue distribution, expressed in shoot meristem and flowers.

It is found in the nucleus. Functionally, heterogeneous nuclear ribonucleoprotein (hnRNP)-like protein that acts as a component of a complex regulating the turnover of mRNAs in the nucleus. Binds with high affinity to RNA molecules that contain U-rich sequences in 3'-UTRs. May function in complex with UBP1 and contribute to the stabilization of mRNAs in the nucleus. The sequence is that of UBP1-associated protein 2B (UBA2B) from Arabidopsis thaliana (Mouse-ear cress).